The sequence spans 86 residues: Small ribosomal subunit protein bS20 (86 aa).

Residues 1–11 (MANIKSAKKRA) show a composition bias toward basic residues. Positions 1–26 (MANIKSAKKRAITSEKNRQHNASRRS) are disordered.

Belongs to the bacterial ribosomal protein bS20 family.

Binds directly to 16S ribosomal RNA. The sequence is that of Small ribosomal subunit protein bS20 from Pseudoalteromonas translucida (strain TAC 125).